The primary structure comprises 400 residues: Multidrug resistance protein MdtH (400 aa).

The Cytoplasmic segment spans residues 1–12; it reads MSRVSQARNLGK. A helical transmembrane segment spans residues 13–33; it reads YFLLIDNMLVVLGFFVVFPLI. Over 34-98 the chain is Periplasmic; that stretch reads SIRFVDQMGW…GFATMGIAHE (65 aa). The helical transmembrane segment at 99 to 116 threads the bilayer; that stretch reads PWLLWFSCLLSGLGGTLF. Over 117–138 the chain is Cytoplasmic; that stretch reads DPPRSALVVKLIRPQQRGRFFS. The chain crosses the membrane as a helical span at residues 139 to 159; that stretch reads LLMMQDSAGAVIGALLGSWLL. At 160–164 the chain is on the periplasmic side; it reads QYDFR. Residues 165–185 form a helical membrane-spanning segment; sequence LVCATGAVLFVLCAAFNAWLL. The Cytoplasmic portion of the chain corresponds to 186–213; the sequence is PAWKLSTVRTPVREGMTRVMRDKRFVTY. The chain crosses the membrane as a helical span at residues 214 to 232; that stretch reads VLTLAGYYMLAVQVMLPIM. Topologically, residues 233–241 are periplasmic; the sequence is VNDVAGAPS. Residues 242 to 262 traverse the membrane as a helical segment; it reads AVKWMYAIEACLSLTLLYPIA. Over 263-274 the chain is Cytoplasmic; the sequence is RWSEKHFRLEHR. A helical membrane pass occupies residues 275–295; it reads LMAGLLIMSLSMMPVGMVSGL. Residues 296 to 297 are Periplasmic-facing; that stretch reads QQ. The chain crosses the membrane as a helical span at residues 298–318; the sequence is LFTLICLFYIGSIIAEPARET. The Cytoplasmic portion of the chain corresponds to 319–337; it reads LSASLADARARGSYMGFSR. Residues 338 to 358 form a helical membrane-spanning segment; sequence LGLAIGGAIGYIGGGWLFDLG. Residues 359–365 lie on the Periplasmic side of the membrane; it reads KSAHQPE. Residues 366 to 386 form a helical membrane-spanning segment; it reads LPWMMLGIIGIFTFLALGWQF. At 387–400 the chain is on the cytoplasmic side; the sequence is SQKRAARRLLERDA.

The protein belongs to the major facilitator superfamily. DHA1 family. MdtH (TC 2.A.1.2.21) subfamily.

The protein localises to the cell inner membrane. The sequence is that of Multidrug resistance protein MdtH from Shigella boydii serotype 4 (strain Sb227).